The following is a 294-amino-acid chain: Flavin-dependent thymidylate synthase (294 aa).

Positions 27 to 250 (GFIRVIDYMG…PFVYEAFEEY (224 aa)) constitute a ThyX domain. Residues T73, 96–98 (RHR), and E104 each bind FAD. DUMP contacts are provided by residues 93–96 (QWIR), 104–108 (EYSAR), and R189. The ThyX motif motif lies at 96–106 (RHRTASVNEYS). Residues 205 to 207 (NLH) and H211 each bind FAD. Residue R216 coordinates dUMP. The active-site Involved in ionization of N3 of dUMP, leading to its activation is the R216.

This sequence belongs to the thymidylate synthase ThyX family. Homotetramer. Requires FAD as cofactor.

The catalysed reaction is dUMP + (6R)-5,10-methylene-5,6,7,8-tetrahydrofolate + NADPH + H(+) = dTMP + (6S)-5,6,7,8-tetrahydrofolate + NADP(+). It functions in the pathway pyrimidine metabolism; dTTP biosynthesis. Its function is as follows. Catalyzes the reductive methylation of 2'-deoxyuridine-5'-monophosphate (dUMP) to 2'-deoxythymidine-5'-monophosphate (dTMP) while utilizing 5,10-methylenetetrahydrofolate (mTHF) as the methyl donor, and NADPH and FADH(2) as the reductant. This is Flavin-dependent thymidylate synthase from Rickettsia conorii (strain ATCC VR-613 / Malish 7).